Reading from the N-terminus, the 382-residue chain is Ribosomal RNA large subunit methyltransferase G (382 aa).

The protein belongs to the methyltransferase superfamily. RlmG family.

It is found in the cytoplasm. It carries out the reaction guanosine(1835) in 23S rRNA + S-adenosyl-L-methionine = N(2)-methylguanosine(1835) in 23S rRNA + S-adenosyl-L-homocysteine + H(+). Functionally, specifically methylates the guanine in position 1835 (m2G1835) of 23S rRNA. This Psychromonas ingrahamii (strain DSM 17664 / CCUG 51855 / 37) protein is Ribosomal RNA large subunit methyltransferase G.